A 438-amino-acid chain; its full sequence is Glutamate-1-semialdehyde 2,1-aminomutase (438 aa).

Lysine 272 carries the post-translational modification N6-(pyridoxal phosphate)lysine.

It belongs to the class-III pyridoxal-phosphate-dependent aminotransferase family. HemL subfamily. In terms of assembly, homodimer. The cofactor is pyridoxal 5'-phosphate.

The protein localises to the cytoplasm. It carries out the reaction (S)-4-amino-5-oxopentanoate = 5-aminolevulinate. It participates in porphyrin-containing compound metabolism; protoporphyrin-IX biosynthesis; 5-aminolevulinate from L-glutamyl-tRNA(Glu): step 2/2. The protein operates within porphyrin-containing compound metabolism; chlorophyll biosynthesis. The protein is Glutamate-1-semialdehyde 2,1-aminomutase of Chloroflexus aggregans (strain MD-66 / DSM 9485).